A 126-amino-acid polypeptide reads, in one-letter code: Probable glycine cleavage system H protein (126 aa).

One can recognise a Lipoyl-binding domain in the interval 24-106; the sequence is VVRVGITDFA…FGDGWLLEVE (83 aa). K65 is modified (N6-lipoyllysine).

Belongs to the GcvH family. As to quaternary structure, the glycine cleavage system is composed of four proteins: P, T, L and H. Requires (R)-lipoate as cofactor.

In terms of biological role, the glycine cleavage system catalyzes the degradation of glycine. The H protein shuttles the methylamine group of glycine from the P protein to the T protein. This Natronomonas pharaonis (strain ATCC 35678 / DSM 2160 / CIP 103997 / JCM 8858 / NBRC 14720 / NCIMB 2260 / Gabara) (Halobacterium pharaonis) protein is Probable glycine cleavage system H protein.